The primary structure comprises 199 residues: Imidazoleglycerol-phosphate dehydratase (199 aa).

It belongs to the imidazoleglycerol-phosphate dehydratase family.

It is found in the cytoplasm. It carries out the reaction D-erythro-1-(imidazol-4-yl)glycerol 3-phosphate = 3-(imidazol-4-yl)-2-oxopropyl phosphate + H2O. It participates in amino-acid biosynthesis; L-histidine biosynthesis; L-histidine from 5-phospho-alpha-D-ribose 1-diphosphate: step 6/9. The polypeptide is Imidazoleglycerol-phosphate dehydratase (Roseiflexus sp. (strain RS-1)).